Consider the following 172-residue polypeptide: Mesogenin-1 (172 aa).

The interval 1 to 69 (METLHHPLVK…SPYSSSSHTQ (69 aa)) is disordered. Polar residues predominate over residues 18-29 (SSDSEPNSSCMA). Positions 42–66 (SLSQTPSPQSLSPAVSYESPYSSSS) are enriched in low complexity. In terms of domain architecture, bHLH spans 108–162 (QRRRKASEREKLRMRAIAEALHTLRNNLPPMYSQGRQPLTKIQTLKCTINYISEL).

It is found in the nucleus. Functionally, involved in specifying the paraxial, but not dorsal, mesoderm. May regulate the expression of T-box transcription factors required for mesoderm formation and differentiation, such as brachyury T, wnt8, vegt and eomes. This chain is Mesogenin-1 (msgn1), found in Xenopus tropicalis (Western clawed frog).